The primary structure comprises 398 residues: Probable purine permease 17 (398 aa).

The tract at residues 1–26 is disordered; the sequence is MEMSKASKQTTRHEESEHVQNPEPDQ. Basic and acidic residues predominate over residues 11-20; that stretch reads TRHEESEHVQ. Serine 29 carries the phosphoserine modification. A run of 10 helical transmembrane segments spans residues 43–63, 88–108, 127–147, 155–175, 183–203, 219–239, 258–278, 301–321, 332–352, and 355–375; these read ISVS…MLLL, WTQA…FFIF, LFFL…LFAL, GIFS…TAII, WIII…PDFG, WLAF…QLGF, VLEM…VGLF, VLSL…MIGL, VVHM…FDFM, and VFSW…GSYF.

Belongs to the purine permeases (TC 2.A.7.14) family.

The protein localises to the membrane. This Arabidopsis thaliana (Mouse-ear cress) protein is Probable purine permease 17 (PUP17).